Reading from the N-terminus, the 106-residue chain is Large ribosomal subunit protein uL23 (106 aa).

Belongs to the universal ribosomal protein uL23 family. Part of the 50S ribosomal subunit. Contacts protein L29, and trigger factor when it is bound to the ribosome.

One of the early assembly proteins it binds 23S rRNA. One of the proteins that surrounds the polypeptide exit tunnel on the outside of the ribosome. Forms the main docking site for trigger factor binding to the ribosome. This Neisseria meningitidis serogroup C / serotype 2a (strain ATCC 700532 / DSM 15464 / FAM18) protein is Large ribosomal subunit protein uL23.